The chain runs to 414 residues: Tyrosine--tRNA ligase (414 aa).

Tyrosine 35 contributes to the L-tyrosine binding site. The short motif at 40–49 (PTADSLHVGH) is the 'HIGH' region element. Tyrosine 164 and glutamine 168 together coordinate L-tyrosine. A 'KMSKS' region motif is present at residues 226 to 230 (KFGKT). Lysine 229 serves as a coordination point for ATP. One can recognise an S4 RNA-binding domain in the interval 347–414 (TKVIDALVEL…KKKYFVILVK (68 aa)).

The protein belongs to the class-I aminoacyl-tRNA synthetase family. TyrS type 1 subfamily. Homodimer.

The protein resides in the cytoplasm. The catalysed reaction is tRNA(Tyr) + L-tyrosine + ATP = L-tyrosyl-tRNA(Tyr) + AMP + diphosphate + H(+). Catalyzes the attachment of tyrosine to tRNA(Tyr) in a two-step reaction: tyrosine is first activated by ATP to form Tyr-AMP and then transferred to the acceptor end of tRNA(Tyr). The polypeptide is Tyrosine--tRNA ligase (Mycoplasma capricolum subsp. capricolum (strain California kid / ATCC 27343 / NCTC 10154)).